The primary structure comprises 1358 residues: Probable serine/threonine-protein kinase ifkB (1358 aa).

The Protein kinase domain occupies 1–582; the sequence is MIGKGGFGVV…TKQLLESGLL (582 aa). ATP-binding positions include 2-10 and Lys-25; that span reads IGKGGFGVV. The segment at 125 to 359 is disordered; sequence GANNTAGGGD…SSSRKKPPKE (235 aa). Polar residues predominate over residues 136-148; that stretch reads VSNANSNKSMIVG. The span at 149–196 shows a compositional bias: low complexity; that stretch reads NNNKKLTLSSSNTSSSSSLLSNNKSKILNTSKSTSTNTSTSTSTSNTN. The span at 197-208 shows a compositional bias: basic residues; the sequence is KNKKISKKKKSK. Low complexity predominate over residues 258-285; sequence NNNNDSNNNYHSDNESDSFSGSISMSDG. A compositionally biased stretch (acidic residues) spans 306-333; sequence DDNENDDDDEEDDDDEYDEEDDDYETFD. Positions 342 to 351 are enriched in low complexity; it reads SNNSKLSTSS. Asp-413 acts as the Proton acceptor in catalysis. 2 disordered regions span residues 445–470 and 1148–1204; these read DDLN…TAQQ and GSGG…QQTS. The segment covering 447-466 has biased composition (low complexity); sequence LNSSTSNAANNINLSSSTNS. The span at 1148–1172 shows a compositional bias: gly residues; the sequence is GSGGSGGSGGGSSMSSGGGGGGNSN. Residues 1185–1199 show a composition bias toward low complexity; sequence SNQSTSSSGNSNNSN.

It belongs to the protein kinase superfamily. Ser/Thr protein kinase family. GCN2 subfamily.

The enzyme catalyses L-seryl-[protein] + ATP = O-phospho-L-seryl-[protein] + ADP + H(+). It carries out the reaction L-threonyl-[protein] + ATP = O-phospho-L-threonyl-[protein] + ADP + H(+). The polypeptide is Probable serine/threonine-protein kinase ifkB (ifkB) (Dictyostelium discoideum (Social amoeba)).